A 373-amino-acid chain; its full sequence is Melanoma-associated antigen C2 (373 aa).

Positions 1–102 (MPPVPGVPFR…QGPSQSPLSS (102 aa)) are disordered. Residues 40–60 (SSASSTLYLVFSPSSFSTSSS) show a composition bias toward low complexity. The segment covering 85–94 (SSPPQGPPQG) has biased composition (pro residues). Positions 135 to 373 (SSFTYTLDEK…VMSSNVSFSE (239 aa)) are interaction with TRIM28. One can recognise an MAGE domain in the interval 141-336 (LDEKVAELVE…SSFPSWYKDA (196 aa)).

As to quaternary structure, interacts with TRIM28 and UBE2H. As to expression, not expressed in normal tissues, except in germ cells in the seminiferous tubules and in Purkinje cells of the cerebellum. Expressed in various tumors, including melanoma, lymphoma, as well as pancreatic cancer, mammary gland cancer, non-small cell lung cancer and liver cancer. In hepatocellular carcinoma, there is an inverse correlation between tumor differentiation and protein expression, i.e. the lower the differentiation, the higher percentage of expression.

It localises to the cytoplasm. The protein localises to the nucleus. Proposed to enhance ubiquitin ligase activity of RING-type zinc finger-containing E3 ubiquitin-protein ligases. In vitro enhances ubiquitin ligase activity of TRIM28 and stimulates p53/TP53 ubiquitination in presence of Ubl-conjugating enzyme UBE2H leading to p53/TP53 degradation. Proposed to act through recruitment and/or stabilization of the Ubl-conjugating enzymes (E2) at the E3:substrate complex. The sequence is that of Melanoma-associated antigen C2 (MAGEC2) from Homo sapiens (Human).